We begin with the raw amino-acid sequence, 175 residues long: MSSQIRQNYSTEVEAAVNRLVNMQLRASYTYLSLGFYFDRDDVALEGVGHFFRELAKEKREGAERLLKLQNQRGGRALFLDVQKPSQDEWGKTQDAMEAALLVEKNLNQALLDLHGLASARGDPHICDFLENHFLDEEVKLIKKMGDHLTNLRRLAGPQAGLGEYLFERLTLKHD.

An N-acetylserine modification is found at serine 2. The Ferritin-like diiron domain maps to glutamine 7–alanine 156. Fe cation is bound by residues glutamate 54, glutamate 58, glutamate 61, and glutamate 64.

It belongs to the ferritin family. In terms of assembly, oligomer of 24 subunits. There are two types of subunits: L (light) chain and H (heavy) chain. The major chain can be light or heavy, depending on the species and tissue type. The functional molecule forms a roughly spherical shell with a diameter of 12 nm and contains a central cavity into which the insoluble mineral iron core is deposited. Interacts with NCOA4.

It is found in the cytoplasmic vesicle. Its subcellular location is the autophagosome. The protein resides in the cytoplasm. The protein localises to the autolysosome. Its function is as follows. Stores iron in a soluble, non-toxic, readily available form. Important for iron homeostasis. Iron is taken up in the ferrous form and deposited as ferric hydroxides after oxidation. Also plays a role in delivery of iron to cells. Mediates iron uptake in capsule cells of the developing kidney. Delivery to lysosomes by the cargo receptor NCOA4 for autophagic degradation and release or iron. The polypeptide is Ferritin light chain (FTL) (Bos taurus (Bovine)).